The sequence spans 255 residues: Syntaxin-6 (255 aa).

Serine 2 is modified (N-acetylserine). Residue serine 2 is modified to Phosphoserine. Positions 2–168 (SMEDPFFVVK…QAQQQLIVEQ (167 aa)) are required for interaction with VPS51. The Cytoplasmic segment spans residues 2 to 234 (SMEDPFFVVK…VSHMTSDRRQ (233 aa)). Positions 41 to 74 (EEIDWTTNELRNNLRSIEWDLEDLDETISIVEAN) form a coiled coil. Phosphoserine occurs at positions 129 and 152. The t-SNARE coiled-coil homology domain occupies 163 to 225 (QLIVEQQDEQ…DNVMKKLAKV (63 aa)). The helical; Anchor for type IV membrane protein transmembrane segment at 235–255 (WCAIAILFAVLLVVLILFLVL) threads the bilayer.

Belongs to the syntaxin family. As to quaternary structure, identified in a complex containing STX6, STX12, VAMP4 and VTI1A. Binds EEA1. Interacts with VPS45A. Interacts with MARCHF2; the interaction promotes MARCHF2-mediated ubiquitination and degradation of CFTR. Interacts with MARCHF3. Interacts with GOPC. Interacts with BLTP3B (via C-terminal coiled-coil domain). Interacts with BAIAP3; this interaction is increased in the presence of calcium. Interacts with VPS13B.

The protein localises to the golgi apparatus membrane. The protein resides in the golgi apparatus. It localises to the trans-Golgi network membrane. It is found in the recycling endosome membrane. Its function is as follows. SNARE promoting movement of transport vesicles to target membranes. Targets endosomes to the trans-Golgi network, and may therefore function in retrograde trafficking. Together with SNARE STX12, promotes movement of vesicles from endosomes to the cell membrane, and may therefore function in the endocytic recycling pathway. This is Syntaxin-6 (STX6) from Homo sapiens (Human).